The sequence spans 164 residues: Phosphopantetheine adenylyltransferase (164 aa).

Substrate is bound at residue Ser9. ATP-binding positions include 9-10 (SF) and His17. Positions 41, 73, and 87 each coordinate substrate. ATP-binding positions include 88 to 90 (GLR), Glu98, and 123 to 129 (NSFLSSS).

Belongs to the bacterial CoaD family. As to quaternary structure, homohexamer. It depends on Mg(2+) as a cofactor.

The protein resides in the cytoplasm. The catalysed reaction is (R)-4'-phosphopantetheine + ATP + H(+) = 3'-dephospho-CoA + diphosphate. The protein operates within cofactor biosynthesis; coenzyme A biosynthesis; CoA from (R)-pantothenate: step 4/5. Functionally, reversibly transfers an adenylyl group from ATP to 4'-phosphopantetheine, yielding dephospho-CoA (dPCoA) and pyrophosphate. The polypeptide is Phosphopantetheine adenylyltransferase (Clostridium kluyveri (strain ATCC 8527 / DSM 555 / NBRC 12016 / NCIMB 10680 / K1)).